A 139-amino-acid polypeptide reads, in one-letter code: Large ribosomal subunit protein uL16 (139 aa).

Positions 1–19 (MLIPRRVKHRKQHHPKRSG) are enriched in basic residues. Positions 1–25 (MLIPRRVKHRKQHHPKRSGMSKGGT) are disordered.

It belongs to the universal ribosomal protein uL16 family. As to quaternary structure, part of the 50S ribosomal subunit.

In terms of biological role, binds 23S rRNA and is also seen to make contacts with the A and possibly P site tRNAs. This is Large ribosomal subunit protein uL16 from Streptomyces griseus subsp. griseus (strain JCM 4626 / CBS 651.72 / NBRC 13350 / KCC S-0626 / ISP 5235).